The sequence spans 72 residues: Small ribosomal subunit protein bS20 (72 aa).

This sequence belongs to the bacterial ribosomal protein bS20 family.

Functionally, binds directly to 16S ribosomal RNA. This Aeromonas hydrophila protein is Small ribosomal subunit protein bS20 (rpsT).